A 294-amino-acid chain; its full sequence is N-acetylmuramic acid 6-phosphate etherase (294 aa).

Positions Val54–Lys217 constitute an SIS domain. The active-site Proton donor is Glu82. Glu113 is a catalytic residue.

This sequence belongs to the GCKR-like family. MurNAc-6-P etherase subfamily. Homodimer.

It catalyses the reaction N-acetyl-D-muramate 6-phosphate + H2O = N-acetyl-D-glucosamine 6-phosphate + (R)-lactate. Its pathway is amino-sugar metabolism; N-acetylmuramate degradation. Its function is as follows. Specifically catalyzes the cleavage of the D-lactyl ether substituent of MurNAc 6-phosphate, producing GlcNAc 6-phosphate and D-lactate. The sequence is that of N-acetylmuramic acid 6-phosphate etherase from Bacillus cereus (strain AH187).